Consider the following 302-residue polypeptide: D-alanine--D-alanine ligase (302 aa).

The region spanning 99–298 is the ATP-grasp domain; that stretch reads KRLFVAEGIP…FEQLIQRIID (200 aa). Residue 128–183 participates in ATP binding; that stretch reads LAALGSPVVVKPADGGSTVGVTIAREAGHLPEAVRLALQYSPQVLIEQYIPGQEIT. 3 residues coordinate Mg(2+): Asp252, Glu265, and Asn267.

It belongs to the D-alanine--D-alanine ligase family. Requires Mg(2+) as cofactor. Mn(2+) serves as cofactor.

The protein resides in the cytoplasm. It carries out the reaction 2 D-alanine + ATP = D-alanyl-D-alanine + ADP + phosphate + H(+). The protein operates within cell wall biogenesis; peptidoglycan biosynthesis. Its function is as follows. Cell wall formation. The chain is D-alanine--D-alanine ligase from Gloeobacter violaceus (strain ATCC 29082 / PCC 7421).